The following is a 312-amino-acid chain: tRNA pseudouridine synthase B (312 aa).

Aspartate 37 (nucleophile) is an active-site residue.

It belongs to the pseudouridine synthase TruB family. Type 1 subfamily.

The enzyme catalyses uridine(55) in tRNA = pseudouridine(55) in tRNA. Its function is as follows. Responsible for synthesis of pseudouridine from uracil-55 in the psi GC loop of transfer RNAs. In Deinococcus geothermalis (strain DSM 11300 / CIP 105573 / AG-3a), this protein is tRNA pseudouridine synthase B.